The sequence spans 118 residues: Large ribosomal subunit protein uL18 (118 aa).

It belongs to the universal ribosomal protein uL18 family. In terms of assembly, part of the 50S ribosomal subunit; part of the 5S rRNA/L5/L18/L25 subcomplex. Contacts the 5S and 23S rRNAs.

This is one of the proteins that bind and probably mediate the attachment of the 5S RNA into the large ribosomal subunit, where it forms part of the central protuberance. The sequence is that of Large ribosomal subunit protein uL18 from Myxococcus xanthus (strain DK1622).